We begin with the raw amino-acid sequence, 198 residues long: MKKVIPLFIIAAGLVIAGYGGFKLIDTNTKTEQTLKEAKLAAKKPQEASGTKNSTDQAKNKASFKPETGQASGILEIPKINAELPIVEGTDADDLEKGVGHYKDSYYPDENGQIVLSGHRDTVFRRTGELEKGDQLRLLLSYGEFTYEIVKTKIVDKDDTSIITLQHEKEELILTTCYPFSYVGNAPKRYIIYGKRVT.

The helical transmembrane segment at 7 to 25 (LFIIAAGLVIAGYGGFKLI) threads the bilayer. The segment covering 36–46 (KEAKLAAKKPQ) has biased composition (basic and acidic residues). Residues 36 to 67 (KEAKLAAKKPQEASGTKNSTDQAKNKASFKPE) are disordered. The segment covering 48–57 (ASGTKNSTDQ) has biased composition (polar residues). His119 (proton donor/acceptor) is an active-site residue. Catalysis depends on Cys177, which acts as the Acyl-thioester intermediate.

It belongs to the bacterial sortase family. Class D subfamily.

The protein localises to the cell membrane. Transpeptidase that anchors surface proteins to the cell wall. Recognizes and modifies its substrate by proteolytic cleavage of a C-terminal sorting signal. Following cleavage, a covalent intermediate is formed via a thioester bond between the sortase and its substrate, which is then transferred and covalently attached to the cell wall. This sortase recognizes a Leu-Pro-Asp-Thr-Ser/Ala (LPDTS/A) motif. It has two substrates, YhcR and YfkN. In Bacillus subtilis (strain 168), this protein is Sortase D.